The primary structure comprises 239 residues: Purine nucleoside phosphorylase DeoD-type (239 aa).

A purine D-ribonucleoside is bound at residue histidine 5. Phosphate contacts are provided by residues glycine 21, arginine 25, arginine 44, and 88 to 91; that span reads RVGS. Residues 180 to 182 and 204 to 205 each bind a purine D-ribonucleoside; these read EME and SD. The Proton donor role is filled by aspartate 205.

The protein belongs to the PNP/UDP phosphorylase family. Homohexamer; trimer of homodimers.

It catalyses the reaction a purine D-ribonucleoside + phosphate = a purine nucleobase + alpha-D-ribose 1-phosphate. The enzyme catalyses a purine 2'-deoxy-D-ribonucleoside + phosphate = a purine nucleobase + 2-deoxy-alpha-D-ribose 1-phosphate. Functionally, catalyzes the reversible phosphorolytic breakdown of the N-glycosidic bond in the beta-(deoxy)ribonucleoside molecules, with the formation of the corresponding free purine bases and pentose-1-phosphate. This Salmonella gallinarum (strain 287/91 / NCTC 13346) protein is Purine nucleoside phosphorylase DeoD-type.